Here is a 147-residue protein sequence, read N- to C-terminus: Small ribosomal subunit protein uS12 (147 aa).

It belongs to the universal ribosomal protein uS12 family. Part of the 30S ribosomal subunit.

With S4 and S5 plays an important role in translational accuracy. Located at the interface of the 30S and 50S subunits. The sequence is that of Small ribosomal subunit protein uS12 from Methanococcus maripaludis (strain C7 / ATCC BAA-1331).